Consider the following 467-residue polypeptide: Sodium-dependent phosphate transport protein 1 (467 aa).

N-linked (GlcNAc...) asparagine glycosylation is found at Asn-41, Asn-49, and Asn-58. Helical transmembrane passes span 81-101 (GIILSSTSYGVIIIQVPVGYF), 119-139 (SVLSLLIPPAAGIGVAWVVVC), 178-198 (FLLGPFIVLLVTGVICESLGW), 200-220 (MVFYIFGACGCAVCLLWFVLF), 257-277 (AILKSLPVWAISTGSFTFFWS), 301-321 (GFLSSLPYLFAWICGNLAGQL), 339-359 (LFTAAGFLLPAIFGVCLPYLS), 365-385 (IVIFLILAGATGSFCLGGVFI), 401-421 (CSTLTGMIGGLIASTLTGLIL), and 433-453 (FILMAAINVTGLIFYLIVATA).

It belongs to the major facilitator superfamily. Sodium/anion cotransporter family. Interacts with PDZK1. Expressed in kidney cortex, liver and brain but not in other tissues.

The protein localises to the apical cell membrane. It carries out the reaction 3 Na(+)(out) + phosphate(out) = 3 Na(+)(in) + phosphate(in). The catalysed reaction is urate(out) = urate(in). In terms of biological role, important for the resorption of phosphate by the kidney. May be involved in actively transporting phosphate into cells via Na(+) cotransport in the renal brush border membrane. Plays a role in urate transport in the kidney. The sequence is that of Sodium-dependent phosphate transport protein 1 (SLC17A1) from Homo sapiens (Human).